Consider the following 348-residue polypeptide: Flagellar P-ring protein (348 aa).

Positions Met1–Tyr24 are cleaved as a signal peptide.

This sequence belongs to the FlgI family. The basal body constitutes a major portion of the flagellar organelle and consists of four rings (L,P,S, and M) mounted on a central rod.

Its subcellular location is the periplasm. The protein localises to the bacterial flagellum basal body. Functionally, assembles around the rod to form the L-ring and probably protects the motor/basal body from shearing forces during rotation. The polypeptide is Flagellar P-ring protein (Helicobacter hepaticus (strain ATCC 51449 / 3B1)).